We begin with the raw amino-acid sequence, 919 residues long: MRPSDDHGETSEFLPITRSRSVSAASQTSTDSSLSTESLFPGEQKPFPNVNGTMALADDDQYRDLEDGEVEQTEPFLASSKKAATGGGRARRIFWILVLLCLGGWLLAFALFLTGGRANYQTASDALQAHGADSALGSTSTSSGKPVTLQQVLAGQWNPRYHAIGWVAGPNNEDGLLVEKGGDEKQGYLRVDDIRSRKGNDTGRESRVLMWKPIVHVDGKAIVPSNVWPSPDLKKVLLISEQQKNWRHSFTGKYWVLDVDSQTAQPLDPSAPDGRVQLALWSPASDAVVFVRDNNLYLRRLSSDSVVVITKDGGENLFYGVPDWVYEEEVISGNSVTWWSNDAKYIAFFRTNETSVPEFPVQYYISRPSGKKPLPGLENYPDVREIKYPKPGAPNPVVDLQFYDVDKNEVFSVEVADDFADDDRIIIEVLWASEGKVLVRSTNRESDILKVYLIDTKSRTGKLVRSEDVAGLDGGWVEPSQSTRFIPADPNNGRPHDGYIDTVPYNGYDHLAYFSPLDSPNALMLTSGEWEVVDAPAAVDLQRGLVYFVGTREAPTQRHVYRVQLDGSNLKPLTDTSKPGYYDVSFSHGTGYALLTYKGPSIPWQAIIKTQGDEITYEDRIEDNAQLTKMVEAYALPTEIYQNVTVDGYTLQLVERRPPHFNPAKKYPVLFYLYGGPGSQTVDRKFTVDFQSYVASSLGYIVVTVDGRGTGFIGRKARCIVRGNLGFYEAHDQIATAKMWAAKSYVDETRMAIWGWSFGGFMTLKTLEQDAGQTFQYGMAVAPVTDWRFYDSIYTERYMHTPQHNPSGYDNSTITDMAALSESVRFLVMHGASDDNVHLQNTLVLIDKLDLSNVENYDLQFYPDSDHSIYFHNAHTMVYDRLSDWLVNAFNGEWHLIAKPVPDESMWERMKRSLPLLYP.

Positions M1–T10 are enriched in basic and acidic residues. Positions M1 to V50 are disordered. Residues M1–R92 are Cytoplasmic-facing. The segment covering S21–S38 has biased composition (low complexity). A helical; Signal-anchor for type II membrane protein transmembrane segment spans residues I93–L113. The Vacuolar segment spans residues T114–P919. 3 N-linked (GlcNAc...) asparagine glycosylation sites follow: N200, N352, and N643. Catalysis depends on S757, which acts as the Charge relay system. Residue N811 is glycosylated (N-linked (GlcNAc...) asparagine). Active-site charge relay system residues include D834 and H867.

The protein belongs to the peptidase S9B family.

The protein localises to the vacuole membrane. It catalyses the reaction Release of an N-terminal dipeptide, Xaa-Yaa-|-Zaa-, from a polypeptide, preferentially when Yaa is Pro, provided Zaa is neither Pro nor hydroxyproline.. Type IV dipeptidyl-peptidase which removes N-terminal dipeptides sequentially from polypeptides having unsubstituted N-termini provided that the penultimate residue is proline. This is Probable dipeptidyl-aminopeptidase B (dapB) from Neosartorya fischeri (strain ATCC 1020 / DSM 3700 / CBS 544.65 / FGSC A1164 / JCM 1740 / NRRL 181 / WB 181) (Aspergillus fischerianus).